The primary structure comprises 321 residues: Tetraacyldisaccharide 4'-kinase (321 aa).

54 to 61 (SVGGTGKT) contributes to the ATP binding site.

This sequence belongs to the LpxK family.

The catalysed reaction is a lipid A disaccharide + ATP = a lipid IVA + ADP + H(+). The protein operates within glycolipid biosynthesis; lipid IV(A) biosynthesis; lipid IV(A) from (3R)-3-hydroxytetradecanoyl-[acyl-carrier-protein] and UDP-N-acetyl-alpha-D-glucosamine: step 6/6. Functionally, transfers the gamma-phosphate of ATP to the 4'-position of a tetraacyldisaccharide 1-phosphate intermediate (termed DS-1-P) to form tetraacyldisaccharide 1,4'-bis-phosphate (lipid IVA). The protein is Tetraacyldisaccharide 4'-kinase of Rickettsia africae (strain ESF-5).